We begin with the raw amino-acid sequence, 189 residues long: Elongation factor P (189 aa).

Lys-34 is subject to N6-(3,6-diaminohexanoyl)-5-hydroxylysine.

This sequence belongs to the elongation factor P family. Post-translationally, may be beta-lysylated on the epsilon-amino group of Lys-34 by the combined action of EpmA and EpmB, and then hydroxylated on the C5 position of the same residue by EpmC (if this protein is present). Lysylation is critical for the stimulatory effect of EF-P on peptide-bond formation. The lysylation moiety may extend toward the peptidyltransferase center and stabilize the terminal 3-CCA end of the tRNA. Hydroxylation of the C5 position on Lys-34 may allow additional potential stabilizing hydrogen-bond interactions with the P-tRNA.

The protein localises to the cytoplasm. It participates in protein biosynthesis; polypeptide chain elongation. Involved in peptide bond synthesis. Alleviates ribosome stalling that occurs when 3 or more consecutive Pro residues or the sequence PPG is present in a protein, possibly by augmenting the peptidyl transferase activity of the ribosome. Modification of Lys-34 is required for alleviation. The chain is Elongation factor P from Francisella tularensis subsp. novicida (strain U112).